Here is a 631-residue protein sequence, read N- to C-terminus: 1-deoxy-D-xylulose-5-phosphate synthase (631 aa).

Residues H87 and 128 to 130 (GHS) each bind thiamine diphosphate. Mg(2+) is bound at residue D159. Thiamine diphosphate-binding positions include 160-161 (GA), N188, F295, and E377. N188 contacts Mg(2+).

This sequence belongs to the transketolase family. DXPS subfamily. In terms of assembly, homodimer. Requires Mg(2+) as cofactor. It depends on thiamine diphosphate as a cofactor.

The enzyme catalyses D-glyceraldehyde 3-phosphate + pyruvate + H(+) = 1-deoxy-D-xylulose 5-phosphate + CO2. Its pathway is metabolic intermediate biosynthesis; 1-deoxy-D-xylulose 5-phosphate biosynthesis; 1-deoxy-D-xylulose 5-phosphate from D-glyceraldehyde 3-phosphate and pyruvate: step 1/1. Functionally, catalyzes the acyloin condensation reaction between C atoms 2 and 3 of pyruvate and glyceraldehyde 3-phosphate to yield 1-deoxy-D-xylulose-5-phosphate (DXP). This chain is 1-deoxy-D-xylulose-5-phosphate synthase, found in Pseudomonas putida (strain ATCC 47054 / DSM 6125 / CFBP 8728 / NCIMB 11950 / KT2440).